The primary structure comprises 351 residues: Muscleblind-like protein 2a (351 aa).

4 C3H1-type zinc fingers span residues 13-41 (WLTL…HPPK), 47-73 (NGRV…HPPA), 177-205 (TDKL…HPSD), and 213-239 (DNTV…HPPA).

The protein belongs to the muscleblind family. As to expression, expressed in fast and slow myotomal muscle, heart, liver, skin, brain and testis.

The protein localises to the nucleus. Its subcellular location is the cytoplasm. Functionally, involved in pre-mRNA alternative splicing regulation. RNA-binding protein that binds to 5'ACACCC-3' core sequence. The polypeptide is Muscleblind-like protein 2a (mbnl2a) (Takifugu rubripes (Japanese pufferfish)).